Here is a 139-residue protein sequence, read N- to C-terminus: MFPLVLSLFLGATSDIWPLAPAEAFQLPPCQLINQTVSLEKEGCPKCHPVETTICSGHCITKDPVIKIPFSNVYQHVCTYRDLHYKTFELPDCPPGVDPTVTYPVAQSCHCGRCAMDTSDCTFESLQPNFCMNDIPFYY.

The signal sequence occupies residues 1–24 (MFPLVLSLFLGATSDIWPLAPAEA). 6 disulfide bridges follow: C30–C78, C44–C93, C47–C131, C55–C109, C59–C111, and C114–C121. Residue N34 is glycosylated (N-linked (GlcNAc...) asparagine).

The protein belongs to the glycoprotein hormones subunit beta family. As to quaternary structure, heterodimer of an alpha and a beta chain.

Its subcellular location is the secreted. In terms of biological role, involved in gametogenesis and steroidogenesis. This chain is Gonadotropin subunit beta-2 (cgbb), found in Morone saxatilis (Striped bass).